The chain runs to 274 residues: NH(3)-dependent NAD(+) synthetase (274 aa).

Position 46–53 (46–53 (GISGGQDS)) interacts with ATP. Asp52 contributes to the Mg(2+) binding site. Arg140 is a deamido-NAD(+) binding site. An ATP-binding site is contributed by Thr160. Glu165 is a Mg(2+) binding site. Residues Lys173 and Asp180 each coordinate deamido-NAD(+). Residues Lys189 and Thr211 each contribute to the ATP site. Residue 260-261 (HK) coordinates deamido-NAD(+).

The protein belongs to the NAD synthetase family. Homodimer.

The enzyme catalyses deamido-NAD(+) + NH4(+) + ATP = AMP + diphosphate + NAD(+) + H(+). It participates in cofactor biosynthesis; NAD(+) biosynthesis; NAD(+) from deamido-NAD(+) (ammonia route): step 1/1. Functionally, catalyzes the ATP-dependent amidation of deamido-NAD to form NAD. Uses ammonia as a nitrogen source. This Lactococcus lactis subsp. cremoris (strain SK11) protein is NH(3)-dependent NAD(+) synthetase.